The primary structure comprises 361 residues: Phospho-N-acetylmuramoyl-pentapeptide-transferase (361 aa).

Transmembrane regions (helical) follow at residues 28–48 (LAII…IEFL), 74–94 (TMGG…LADL), 99–119 (IWIT…DDYA), 133–153 (SKLL…EYLD), 168–188 (LSLD…VGSS), 203–223 (VPIA…GNLI), 236–256 (TGEL…FLWF), 263–283 (VFMG…ISVI), 288–308 (IVLA…ILQV), and 338–358 (KVVI…LSSL).

It belongs to the glycosyltransferase 4 family. MraY subfamily. Requires Mg(2+) as cofactor.

The protein resides in the cell inner membrane. The catalysed reaction is UDP-N-acetyl-alpha-D-muramoyl-L-alanyl-gamma-D-glutamyl-meso-2,6-diaminopimeloyl-D-alanyl-D-alanine + di-trans,octa-cis-undecaprenyl phosphate = di-trans,octa-cis-undecaprenyl diphospho-N-acetyl-alpha-D-muramoyl-L-alanyl-D-glutamyl-meso-2,6-diaminopimeloyl-D-alanyl-D-alanine + UMP. It participates in cell wall biogenesis; peptidoglycan biosynthesis. Catalyzes the initial step of the lipid cycle reactions in the biosynthesis of the cell wall peptidoglycan: transfers peptidoglycan precursor phospho-MurNAc-pentapeptide from UDP-MurNAc-pentapeptide onto the lipid carrier undecaprenyl phosphate, yielding undecaprenyl-pyrophosphoryl-MurNAc-pentapeptide, known as lipid I. This is Phospho-N-acetylmuramoyl-pentapeptide-transferase from Rickettsia africae (strain ESF-5).